Consider the following 721-residue polypeptide: Peroxisomal fatty acid beta-oxidation multifunctional protein AIM1 (721 aa).

The active-site Nucleophile is the glutamate 116. The active-site Proton acceptor is the glutamate 136. The Microbody targeting signal signature appears at serine 719–leucine 721.

The protein in the N-terminal section; belongs to the enoyl-CoA hydratase/isomerase family. It in the central section; belongs to the 3-hydroxyacyl-CoA dehydrogenase family. Widely expressed.

Its subcellular location is the peroxisome. It catalyses the reaction a (3S)-3-hydroxyacyl-CoA = a (2E)-enoyl-CoA + H2O. The enzyme catalyses a 4-saturated-(3S)-3-hydroxyacyl-CoA = a (3E)-enoyl-CoA + H2O. It carries out the reaction (3S)-3-hydroxybutanoyl-CoA = (2E)-butenoyl-CoA + H2O. The catalysed reaction is (3S)-hydroxyoctanoyl-CoA = (2E)-octenoyl-CoA + H2O. It catalyses the reaction (3S)-3-hydroxydodecanoyl-CoA = (2E)-dodecenoyl-CoA + H2O. The enzyme catalyses (3S)-hydroxytetradecanoyl-CoA = (2E)-tetradecenoyl-CoA + H2O. It carries out the reaction (3S)-hydroxyhexanoyl-CoA = (2E)-hexenoyl-CoA + H2O. The catalysed reaction is a (3Z)-enoyl-CoA = a 4-saturated (2E)-enoyl-CoA. It catalyses the reaction a (3E)-enoyl-CoA = a 4-saturated (2E)-enoyl-CoA. The enzyme catalyses (3S)-3-hydroxybutanoyl-CoA = (3R)-3-hydroxybutanoyl-CoA. It carries out the reaction a (3S)-3-hydroxyacyl-CoA + NAD(+) = a 3-oxoacyl-CoA + NADH + H(+). The catalysed reaction is (3S)-3-hydroxybutanoyl-CoA + NAD(+) = acetoacetyl-CoA + NADH + H(+). It catalyses the reaction (3S)-hydroxyhexanoyl-CoA + NAD(+) = 3-oxohexanoyl-CoA + NADH + H(+). The enzyme catalyses (3S)-hydroxyoctanoyl-CoA + NAD(+) = 3-oxooctanoyl-CoA + NADH + H(+). It carries out the reaction (3S)-3-hydroxydodecanoyl-CoA + NAD(+) = 3-oxododecanoyl-CoA + NADH + H(+). The catalysed reaction is (3S)-hydroxytetradecanoyl-CoA + NAD(+) = 3-oxotetradecanoyl-CoA + NADH + H(+). The protein operates within lipid metabolism; fatty acid beta-oxidation. Involved in peroxisomal fatty acid beta-oxidation. Required for wound-induced jasmonate biosynthesis. Possesses enoyl-CoA hydratase activity against short chain substrates (C4-C6) and 3-hydroxyacyl-CoA dehydrogenase activity against chains of variable sizes (C6-C16). Possesses cinnamoyl-CoA hydratase activity and is involved in the peroxisomal beta-oxidation pathway for the biosynthesis of benzoic acid (BA). Required for the accumulation in seeds of benzoylated glucosinolates (BGs) and substituted hydroxybenzoylated choline esters, which are BA-containing secondary metabolites. Required for salicylic acid (SA) in seeds. This is Peroxisomal fatty acid beta-oxidation multifunctional protein AIM1 (AIM1) from Arabidopsis thaliana (Mouse-ear cress).